Consider the following 991-residue polypeptide: Integrator complex subunit 8 (991 aa).

A compositionally biased stretch (basic and acidic residues) spans 1-10; sequence MSAEAADREA. Residues 1–22 are disordered; that stretch reads MSAEAADREAATSSRPCTPPQT. The segment covering 11–22 has biased composition (polar residues); sequence ATSSRPCTPPQT. The WFEF motif signature appears at 24 to 29; sequence WFEFLL. TPR repeat units lie at residues 250–288, 319–355, 569–602, and 829–862; these read CQGCYDLGAVYFLQGPTNPSCYEKARDHFFRTKQLVSKI, SQPATPYSQIHNFMKTNNYQGILKIFLEDHLNNSLPD, VYILLAKGLHCSAIKDYPRAKQLLSACLELVTEF, and HSWLTIQADIYFATNEYSAALNYYLQAGAVCSDF.

Belongs to the Integrator subunit 8 family. In terms of assembly, component of the Integrator complex, composed of core subunits INTS1, INTS2, INTS3, INTS4, INTS5, INTS6, INTS7, INTS8, INTS9/RC74, INTS10, INTS11/CPSF3L, INTS12, INTS13, INTS14 and INTS15. The core complex associates with protein phosphatase 2A subunits PPP2CA and PPP2R1A, to form the Integrator-PP2A (INTAC) complex.

It localises to the nucleus. The protein resides in the chromosome. Functionally, component of the integrator complex, a multiprotein complex that terminates RNA polymerase II (Pol II) transcription in the promoter-proximal region of genes. The integrator complex provides a quality checkpoint during transcription elongation by driving premature transcription termination of transcripts that are unfavorably configured for transcriptional elongation: the complex terminates transcription by (1) catalyzing dephosphorylation of the C-terminal domain (CTD) of Pol II subunit POLR2A/RPB1 and SUPT5H/SPT5, (2) degrading the exiting nascent RNA transcript via endonuclease activity and (3) promoting the release of Pol II from bound DNA. The integrator complex is also involved in terminating the synthesis of non-coding Pol II transcripts, such as enhancer RNAs (eRNAs), small nuclear RNAs (snRNAs), telomerase RNAs and long non-coding RNAs (lncRNAs). Within the integrator complex, INTS8 is required for the recruitment of protein phosphatase 2A (PP2A) to transcription pause-release checkpoint. This Xenopus laevis (African clawed frog) protein is Integrator complex subunit 8 (ints8).